A 129-amino-acid polypeptide reads, in one-letter code: Thyroid hormone receptor alpha (129 aa).

Residues 26–129 (AEWELIRMVT…EIMSLRAAVR (104 aa)) form the NR LBD domain. Arginine 91 contributes to the 3,3',5-triiodo-L-thyronine binding site.

It belongs to the nuclear hormone receptor family. NR1 subfamily.

It is found in the nucleus. Nuclear hormone receptor that can act as a repressor or activator of transcription. High affinity receptor for thyroid hormones, including triiodothyronine and thyroxine. The sequence is that of Thyroid hormone receptor alpha (thra1) from Sparus aurata (Gilthead sea bream).